Consider the following 97-residue polypeptide: Cell division topological specificity factor (97 aa).

This sequence belongs to the MinE family.

Functionally, prevents the cell division inhibition by proteins MinC and MinD at internal division sites while permitting inhibition at polar sites. This ensures cell division at the proper site by restricting the formation of a division septum at the midpoint of the long axis of the cell. This Synechococcus sp. (strain RCC307) protein is Cell division topological specificity factor.